Consider the following 386-residue polypeptide: Cytochrome b (386 aa).

4 helical membrane-spanning segments follow: residues phenylalanine 39–methionine 59, phenylalanine 83–methionine 104, tryptophan 119–leucine 139, and phenylalanine 184–leucine 204. Heme b contacts are provided by histidine 89 and histidine 103. Residues histidine 188 and histidine 202 each coordinate heme b. Histidine 207 is a binding site for a ubiquinone. Transmembrane regions (helical) follow at residues tyrosine 232 to methionine 252, leucine 294 to histidine 314, leucine 326 to alanine 346, and tyrosine 353 to leucine 374.

It belongs to the cytochrome b family. In terms of assembly, the main subunits of complex b-c1 are: cytochrome b, cytochrome c1 and the Rieske protein. It depends on heme b as a cofactor.

The protein resides in the mitochondrion inner membrane. Functionally, component of the ubiquinol-cytochrome c reductase complex (complex III or cytochrome b-c1 complex) that is part of the mitochondrial respiratory chain. The b-c1 complex mediates electron transfer from ubiquinol to cytochrome c. Contributes to the generation of a proton gradient across the mitochondrial membrane that is then used for ATP synthesis. This Sarcophyton glaucum (Toadstool umbrella leather coral) protein is Cytochrome b (MT-CYB).